A 162-amino-acid polypeptide reads, in one-letter code: Regulatory protein RecX (162 aa).

The protein belongs to the RecX family.

The protein localises to the cytoplasm. In terms of biological role, modulates RecA activity. The chain is Regulatory protein RecX from Xanthomonas oryzae pv. oryzae (strain PXO99A).